The chain runs to 49 residues: Large ribosomal subunit protein bL33C (49 aa).

It belongs to the bacterial ribosomal protein bL33 family.

This chain is Large ribosomal subunit protein bL33C, found in Lactococcus lactis subsp. cremoris (strain MG1363).